A 190-amino-acid chain; its full sequence is Elongation factor P-like protein (190 aa).

It belongs to the elongation factor P family.

The protein is Elongation factor P-like protein of Proteus mirabilis (strain HI4320).